Reading from the N-terminus, the 210-residue chain is 7-carboxy-7-deazaguanine synthase (210 aa).

Substrate-binding positions include 12–14 (LQG) and Arg27. A Radical SAM core domain is found at 18-210 (NAGRPAVFCR…MQTHKYLNIP (193 aa)). [4Fe-4S] cluster is bound by residues Cys31, Cys46, and Cys49. Residue 48–50 (FCD) participates in S-adenosyl-L-methionine binding. Thr51 is a Mg(2+) binding site. Thr90 is a binding site for substrate. S-adenosyl-L-methionine-binding positions include Gly92, 133–135 (SPK), and 173–176 (QPMD). Pro210 is a binding site for substrate.

This sequence belongs to the radical SAM superfamily. 7-carboxy-7-deazaguanine synthase family. In terms of assembly, homodimer. [4Fe-4S] cluster serves as cofactor. The cofactor is S-adenosyl-L-methionine. Mg(2+) is required as a cofactor.

The enzyme catalyses 6-carboxy-5,6,7,8-tetrahydropterin + H(+) = 7-carboxy-7-deazaguanine + NH4(+). The protein operates within purine metabolism; 7-cyano-7-deazaguanine biosynthesis. Functionally, catalyzes the complex heterocyclic radical-mediated conversion of 6-carboxy-5,6,7,8-tetrahydropterin (CPH4) to 7-carboxy-7-deazaguanine (CDG), a step common to the biosynthetic pathways of all 7-deazapurine-containing compounds. In Burkholderia multivorans (strain ATCC 17616 / 249), this protein is 7-carboxy-7-deazaguanine synthase.